We begin with the raw amino-acid sequence, 212 residues long: MSQNTIHKIAVKKRTTTGKNENNRLRSSGMVPVNIIGGGVATSGAVNEKELEKMVHSGIRQSTLIELDVEGQGAQKVFVKEIQRFPEIDRIRHVDFYKVVPGQKIVTKIGIETTGIAKGSKTGGQFEHIIHEIRVKTIPEDLLENLTIDVTDLDVGDSIKISQLKVPTSWEILINGDPIVTSVNKTKALLAAERAEAKGSAADDAKAKKGKK.

This sequence belongs to the bacterial ribosomal protein bL25 family. CTC subfamily. In terms of assembly, part of the 50S ribosomal subunit; part of the 5S rRNA/L5/L18/L25 subcomplex. Contacts the 5S rRNA. Binds to the 5S rRNA independently of L5 and L18.

This is one of the proteins that binds to the 5S RNA in the ribosome where it forms part of the central protuberance. This is Large ribosomal subunit protein bL25 from Leptospira interrogans serogroup Icterohaemorrhagiae serovar copenhageni (strain Fiocruz L1-130).